The sequence spans 1035 residues: NACHT, LRR and PYD domains-containing protein 3 (1035 aa).

Residues 1–93 (MKMASTRCKL…YEKAKRDEPK (93 aa)) enclose the Pyrin domain. At serine 5 the chain carries Phosphoserine. The cysteines at positions 8 and 108 are disulfide-linked. Tyrosine 13 carries the phosphotyrosine modification. Cysteine 130 carries S-palmitoyl cysteine lipidation. A required for binding to phosphatidylinositol 4-phosphate (PtdIns4P) region spans residues 131-134 (KKKK). Residues tyrosine 136, tyrosine 140, and tyrosine 143 each carry the phosphotyrosine modification. The region spanning 140 to 210 (YRKYVRSRFQ…SPIKMELLFD (71 aa)) is the FISNA domain. 2 positions are modified to phosphoserine: serine 161 and serine 163. A Phosphotyrosine modification is found at tyrosine 168. Threonine 169 is an ATP binding site. A phosphoserine mark is found at serine 198 and serine 201. In terms of domain architecture, NACHT spans 220–536 (HTVVFQGAAG…EFFAAMYYLL (317 aa)). 226 to 233 (GAAGIGKT) is a binding site for ATP. Phosphoserine is present on residues serine 265 and serine 295. Lysine 324 is covalently cross-linked (Glycyl lysine isopeptide (Lys-Gly) (interchain with G-Cter in ubiquitin)). At serine 334 the chain carries Phosphoserine. The short motif at 355–359 (LEKLQ) is the KFERQ-like motif 1 element. Lysine 430 participates in a covalent cross-link: Glycyl lysine isopeptide (Lys-Gly) (interchain with G-Cter in ubiquitin). Histidine 522 lines the ATP pocket. Residues 603–607 (QIRLE) carry the KFERQ-like motif 2 motif. Residue lysine 689 forms a Glycyl lysine isopeptide (Lys-Gly) (interchain with G-Cter in ubiquitin) linkage. A phosphoserine mark is found at serine 727 and serine 734. LRR repeat units follow at residues 741 to 761 (SLTE…RVLC), 770 to 791 (NIRR…DISL), 798 to 818 (KLVE…RLLC), 827 to 848 (NLKK…DLAS), and 855 to 875 (SLTR…AILC). Positions 797–801 (QKLVE) match the KFERQ-like motif 3 motif. Residue serine 805 is modified to Phosphoserine. Residues cysteine 836, cysteine 837, and cysteine 843 are each lipidated (S-palmitoyl cysteine). Tyrosine 860 is modified (phosphotyrosine). Lysine 877 is covalently cross-linked (Glycyl lysine isopeptide (Lys-Gly) (interchain with G-Cter in ubiquitin)). 4 LRR repeats span residues 884–905 (NLQK…ALSS), 912–932 (NLTH…KLLC), 941–962 (KLQV…DLST), and 969–990 (SLRK…MFCE). Lysine 926 is covalently cross-linked (Glycyl lysine isopeptide (Lys-Gly) (interchain with G-Cter in ubiquitin)). Cysteine 957 is lipidated: S-palmitoyl cysteine. A Glycyl lysine isopeptide (Lys-Gly) (interchain with G-Cter in ubiquitin) cross-link involves residue lysine 972. Serine 974 is subject to Phosphoserine. The KFERQ-like motif 4 motif lies at 990–994 (EVLKQ). The residue at position 1034 (serine 1034) is a Phosphoserine.

The protein belongs to the NLRP family. As to quaternary structure, sensor component of NLRP3 inflammasomes; inflammasomes are supramolecular complexes that assemble in the cytosol in response to pathogens and other damage-associated signals and play critical roles in innate immunity and inflammation. The core of NLRP3 inflammasomes consists of a signal sensor component (NLRP3), an adapter (PYCARD/ASC), which recruits an effector pro-inflammatory caspase (CASP1 and, possibly, CASP4 and CASP5). Homodecamer; inactive NLRP3 forms homodecameric double-ring cages that hide pyrin domains within NACHT-LRR rings to avoid premature activation. Interacts (via pyrin domain) with PYCARD/ASC (via pyrin domain); interaction is direct. Interacts (via LRR repeat domain) with NEK7 (via N-terminus); the interaction is required for the formation of the complex NLRP3:PYCARD, oligomerization of PYCARD/ASC and activation of CASP1. Interacts (via LRR repeat domain) with NR4A1/Nur77 (via N-terminus); the interaction is direct, requires activation of NR4A1 by its ligands NBRE-containing dsDNA and lipopolysaccharide, and stimulates the association of NLRP3 with NEK7 for non-canonical NLRP3 inflammasome activation. Interacts with CARD8; leading to inhibit formation of the NLRP3 inflammasome. Interacts with MEFV; this interaction targets NLRP3 to degradation by autophagy, hence preventing excessive IL1B- and IL18-mediated inflammation. Interacts with EIF2AK2/PKR; this interaction requires EIF2AK2 activity, is accompanied by EIF2AK2 autophosphorylation and promotes inflammasome assembly in response to specific stimuli. Interacts with GBP5 (via DAPIN domain); this interaction promotes inflammasome assembly in response to microbial and soluble, but not crystalline, agents. Interacts with PML (isoform PML-1) (via the leucine-rich repeat (LRR) domain); PML-mediated increase in NLRP3 inflammasome activation does not depend upon this interaction. Interacts (via NACHT domain) with DHX33 (via DEAH box); NLRP3 activation in presence of cytosolic dsRNA is mediated by DHX33. Interacts (via NACHT and LRR domains) with ARRB2; this interaction is direct and inducible by polyunsaturated fatty acids (PUFAs). Interacts (via NACHT domain) with DDX3X under both LPS-primed and inflammasome-activating conditions. Interacts with IRF4 (via the LRR domain); this interaction is direct and is required for optimal IRF4 binding to IL4 promoter and efficient IL4 transactivation during differentiation of Th2 helper T-cells. Interacts with MAVS; promoting localization to mitochondria and activation of the NLRP3 inflammasome. Interacts with MARK4; promoting localization of NLRP3 to the microtubule organizing center (MTOC). Interacts with TRIM50; this interaction also promotes NLRP3 oligomerization and subsequent inflammasome activation. Interacts with IRGM; preventing NLRP3 inflammasome assembly and promoting NLRP3 degradation. Interacts (via KFERQ-like motifs) with HSPA8/HSC70; promoting NLRP3 degradation by the chaperone-mediated autophagy pathway. Interacts (via NACHT and LLR domains) with ABHD8; this interaction is enhanced in the presence of NLRP3 inflammasome inducers, such as ATP, nigericin, silica, or alum. Interaction with ABHD8 leads the recruitment of ZDHHC12, hence facilitating NLRP3 palmitoylation and degradation by the chaperone-mediated autophagy pathway (CMA), therefore attenuating NLRP3 inflammasome activation. Post-translationally, the disulfide bond in the pyrin domain might play a role in reactive oxygen species-mediated activation. In terms of processing, phosphorylation at Ser-198 by MAPK8/JNK1 increases inflammasome activation by promoting deubiquitination by BRCC3 and NLRP3 homooligomerization. Phosphorylation at Ser-805 by CSNK1A1 prevents inflammasome activation by preventing NEK7 recruitment. Phosphorylation at Ser-5 in the pyrin domain inhibits homomultimerization of NLRP3 and activation of the NLRP3 inflammasome: dephosphorylation by protein phosphatase 2A (PP2A) promotes assembly of the NLRP3 inflammasome. Phosphorylation at Ser-295 by PKD/PRKD1 promotes NLRP3 inflammasome assembly. Phosphorylation by ERK1/MAPK3 promotes NLRP3 inflammasome assembly. Phosphorylation by BTK (at Tyr-136, Tyr-140, Tyr-143 and Tyr-168) in the region that mediates binding to phosphatidylinositol phosphate, promotes relocalization of NLRP3 and assembly of the NLRP3 inflammasome. Phosphorylation at Tyr-860 inhibits NLRP3 inflammasome assembly: dephosphorylation by PTPN22 promotes inflammasome activation. Phosphorylated by LATS1 and LATS2 at Ser-265 following palmitoylation by ZDHHC1, promoting its relocalization to the microtubule organizing center (MTOC), where NLRP3 is activated by NEK7, leading to inflammasome assembly and activation. Ubiquitinated; undergoes both 'Lys-48'- and 'Lys-63'-linked polyubiquitination. Ubiquitination does not lead to degradation, but inhibits inflammasome activation. Deubiquitination is catalyzed by BRCC3 and associated with NLRP3 activation and inflammasome assembly. This process can be induced by the activation of Toll-like receptors (by LPS), through a non-transcriptional pathway dependent on the mitochondrial production of reactive oxygen species, and by ATP. Ubiquitinated by TRIM31 via 'Lys-48'-linked ubiquitination, leading to its degradation by the proteasome. Ubiquitinated at Lys-689 by the SCF(FBXL2) complex, leading to its degradation by the proteasome. Ubiquitinated by TRIM35 via 'lys-48' and 'Lys-63'-linked ubiquitination leading to inhibition of NLRP3 inflammasome activation. Undergoes 'Lys-27'-linked polyubiquitination by MARCHF5, leading to NLRP3-NEK7 complex formation and NLRP3 oligomerization. Post-translationally, palmitoylation by ZDHHC12 promotes NLRP3 degradation by the chaperone-mediated autophagy pathway (CMA) and therefore limits NLRP3 inflammasome activation. Interaction with ZDHHC12, and hence NLRP3 palmitoylation, is greatly enhanced by ABHD8. Following palmitoylation, HSPA8/HSC70 recognizes and binds the KFERQ-like motifs on NLRP3 and promotes NLRP3 recruitment to lysosomes, where it is degraded via the chaperone-mediated autophagy pathway in a LAMP2-dependent process. Palmitoylation at Cys-836 and Cys-837 by ZDHHC5 enhances its binding to NEK7 leading to inflammasome assembly and activation. Palmitoylation at Cys-130 and Cys-957 by ZDHHC1 facilitates phosphorylation at Ser-265 by LATS1 and LATS2, promoting its relocalization to the microtubule organizing center (MTOC), where NLRP3 is activated by NEK7, leading to inflammasome assembly and activation. Depalmitoylated by ABHD17A. In terms of processing, degraded via selective autophagy following interaction with IRGM. IRGM promotes NLRP3 recruitment to autophagosome membranes, promoting its SQSTM1/p62-dependent autophagy-dependent degradation. In terms of tissue distribution, highly expressed in oocyte, testis, spleen, thymus and kidney.

Its subcellular location is the cytoplasm. The protein localises to the cytosol. It localises to the inflammasome. It is found in the cytoskeleton. The protein resides in the microtubule organizing center. Its subcellular location is the golgi apparatus membrane. The protein localises to the endoplasmic reticulum. It localises to the mitochondrion. It is found in the secreted. The protein resides in the nucleus. It carries out the reaction ATP + H2O = ADP + phosphate + H(+). Its activity is regulated as follows. Under resting conditions, NLRP3 binds ADP and is autoinhibited. Inactive NLRP3 forms homodecameric double-ring cages that hide pyrin domains within NACHT-LRR rings to avoid premature activation. NLRP3 activation stimuli include extracellular ATP, nigericin, reactive oxygen species, crystals of monosodium urate or cholesterol, amyloid-beta fibers, environmental or industrial particles and nanoparticles, such as asbestos, silica, aluminum salts, cytosolic dsRNA, etc. Almost all stimuli trigger intracellular K(+) efflux. These stimuli lead to membrane perturbations that induce activation of NLRP3. Upon activation, NLRP3 is transported to microtubule organizing center (MTOC), where it is unlocked by NEK7, leading to its relocalization to dispersed trans-Golgi network (dTGN) vesicle membranes and recruitment of PYCARD/ASC for the formation of an active inflammasome complex. NEK7-activated NLRP3 forms a disk-shaped inflammasome. NLRP3 and PYCARD/ASC interact via their respective pyrin domains; interaction initiates speck formation (nucleation) which greatly enhances further addition of soluble PYCARD/ASC molecules to the speck in a prion-like polymerization process. Clustered PYCARD/ASC nucleates the formation of CASP1 filaments through the interaction of their respective CARD domains, acting as a platform for CASP1 polymerization and activation. Active CASP1 then processes IL1B and IL18 precursors, leading to the release of mature cytokines in the extracellular milieu and inflammatory response. NLRP3 inflammasome assembly is inhibited by IRGM, which impedes NLRP3 oligomerization. NLRP3 inflammasome is inhibited by cyclic AMP (cAMP), which directly binds NLRP3; inhibition is relieved by calcium-sensing receptor CASR, which inhibits production of cAMP. Specifically inhibited by sulfonylurea MCC950 (also named CP-456,773, CRID3), a potent and specific small-molecule inhibitor of the NLRP3 inflammasome that acts by preventing ATP hydrolysis. Sensor component of the NLRP3 inflammasome, which mediates inflammasome activation in response to defects in membrane integrity, leading to secretion of inflammatory cytokines IL1B and IL18 and pyroptosis. In response to pathogens and other damage-associated signals that affect the integrity of membranes, initiates the formation of the inflammasome polymeric complex composed of NLRP3, CASP1 and PYCARD/ASC. Recruitment of pro-caspase-1 (proCASP1) to the NLRP3 inflammasome promotes caspase-1 (CASP1) activation, which subsequently cleaves and activates inflammatory cytokines IL1B and IL18 and gasdermin-D (GSDMD), promoting cytokine secretion and pyroptosis. Activation of NLRP3 inflammasome is also required for HMGB1 secretion; stimulating inflammatory responses. Under resting conditions, ADP-bound NLRP3 is autoinhibited. NLRP3 activation stimuli include extracellular ATP, nigericin, reactive oxygen species, crystals of monosodium urate or cholesterol, amyloid-beta fibers, environmental or industrial particles and nanoparticles, such as asbestos, silica, aluminum salts, cytosolic dsRNA, etc. Almost all stimuli trigger intracellular K(+) efflux. These stimuli lead to membrane perturbation and activation of NLRP3. Upon activation, NLRP3 is transported to microtubule organizing center (MTOC), where it is unlocked by NEK7, leading to its relocalization to dispersed trans-Golgi network (dTGN) vesicle membranes and formation of an active inflammasome complex. Associates with dTGN vesicle membranes by binding to phosphatidylinositol 4-phosphate (PtdIns4P). Shows ATPase activity. Functionally, independently of inflammasome activation, regulates the differentiation of T helper 2 (Th2) cells and has a role in Th2 cell-dependent asthma and tumor growth. During Th2 differentiation, required for optimal IRF4 binding to IL4 promoter and for IRF4-dependent IL4 transcription. Binds to the consensus DNA sequence 5'-GRRGGNRGAG-3'. May also participate in the transcription of IL5, IL13, GATA3, CCR3, CCR4 and MAF. This is NACHT, LRR and PYD domains-containing protein 3 (NLRP3) from Macaca mulatta (Rhesus macaque).